A 68-amino-acid polypeptide reads, in one-letter code: ATP synthase F(0) complex subunit 8 (68 aa).

Residues 8 to 24 form a helical membrane-spanning segment; sequence VWPTTITPMLLTLFLIT. An N6-acetyllysine; alternate modification is found at Lys54. An N6-succinyllysine; alternate modification is found at Lys54. Lys57 carries the post-translational modification N6-acetyllysine.

This sequence belongs to the ATPase protein 8 family. As to quaternary structure, component of the ATP synthase complex composed at least of ATP5F1A/subunit alpha, ATP5F1B/subunit beta, ATP5MC1/subunit c (homooctomer), MT-ATP6/subunit a, MT-ATP8/subunit 8, ATP5ME/subunit e, ATP5MF/subunit f, ATP5MG/subunit g, ATP5MK/subunit k, ATP5MJ/subunit j, ATP5F1C/subunit gamma, ATP5F1D/subunit delta, ATP5F1E/subunit epsilon, ATP5PF/subunit F6, ATP5PB/subunit b, ATP5PD/subunit d, ATP5PO/subunit OSCP. ATP synthase complex consists of a soluble F(1) head domain (subunits alpha(3) and beta(3)) - the catalytic core - and a membrane F(0) domain - the membrane proton channel (subunits c, a, 8, e, f, g, k and j). These two domains are linked by a central stalk (subunits gamma, delta, and epsilon) rotating inside the F1 region and a stationary peripheral stalk (subunits F6, b, d, and OSCP). Interacts with PRICKLE3.

The protein localises to the mitochondrion membrane. Functionally, subunit 8, of the mitochondrial membrane ATP synthase complex (F(1)F(0) ATP synthase or Complex V) that produces ATP from ADP in the presence of a proton gradient across the membrane which is generated by electron transport complexes of the respiratory chain. ATP synthase complex consist of a soluble F(1) head domain - the catalytic core - and a membrane F(1) domain - the membrane proton channel. These two domains are linked by a central stalk rotating inside the F(1) region and a stationary peripheral stalk. During catalysis, ATP synthesis in the catalytic domain of F(1) is coupled via a rotary mechanism of the central stalk subunits to proton translocation. In vivo, can only synthesize ATP although its ATP hydrolase activity can be activated artificially in vitro. Part of the complex F(0) domain. The chain is ATP synthase F(0) complex subunit 8 from Pan paniscus (Pygmy chimpanzee).